A 222-amino-acid chain; its full sequence is Thiamine-phosphate synthase (222 aa).

4-amino-2-methyl-5-(diphosphooxymethyl)pyrimidine contacts are provided by residues 44–48 (QVRMK) and Asn75. Residues Asp76 and Asp95 each contribute to the Mg(2+) site. Thr114 is a binding site for 4-amino-2-methyl-5-(diphosphooxymethyl)pyrimidine. Residue 140 to 142 (SRS) participates in 2-[(2R,5Z)-2-carboxy-4-methylthiazol-5(2H)-ylidene]ethyl phosphate binding. Lys143 contributes to the 4-amino-2-methyl-5-(diphosphooxymethyl)pyrimidine binding site. Gly171 serves as a coordination point for 2-[(2R,5Z)-2-carboxy-4-methylthiazol-5(2H)-ylidene]ethyl phosphate.

The protein belongs to the thiamine-phosphate synthase family. Mg(2+) is required as a cofactor.

The catalysed reaction is 2-[(2R,5Z)-2-carboxy-4-methylthiazol-5(2H)-ylidene]ethyl phosphate + 4-amino-2-methyl-5-(diphosphooxymethyl)pyrimidine + 2 H(+) = thiamine phosphate + CO2 + diphosphate. The enzyme catalyses 2-(2-carboxy-4-methylthiazol-5-yl)ethyl phosphate + 4-amino-2-methyl-5-(diphosphooxymethyl)pyrimidine + 2 H(+) = thiamine phosphate + CO2 + diphosphate. It carries out the reaction 4-methyl-5-(2-phosphooxyethyl)-thiazole + 4-amino-2-methyl-5-(diphosphooxymethyl)pyrimidine + H(+) = thiamine phosphate + diphosphate. The protein operates within cofactor biosynthesis; thiamine diphosphate biosynthesis; thiamine phosphate from 4-amino-2-methyl-5-diphosphomethylpyrimidine and 4-methyl-5-(2-phosphoethyl)-thiazole: step 1/1. Functionally, condenses 4-methyl-5-(beta-hydroxyethyl)thiazole monophosphate (THZ-P) and 2-methyl-4-amino-5-hydroxymethyl pyrimidine pyrophosphate (HMP-PP) to form thiamine monophosphate (TMP). This chain is Thiamine-phosphate synthase, found in Anaeromyxobacter dehalogenans (strain 2CP-C).